A 358-amino-acid polypeptide reads, in one-letter code: Peptide chain release factor 1 (358 aa).

Gln-235 carries the post-translational modification N5-methylglutamine.

The protein belongs to the prokaryotic/mitochondrial release factor family. Post-translationally, methylated by PrmC. Methylation increases the termination efficiency of RF1.

It localises to the cytoplasm. In terms of biological role, peptide chain release factor 1 directs the termination of translation in response to the peptide chain termination codons UAG and UAA. The chain is Peptide chain release factor 1 from Nitrosospira multiformis (strain ATCC 25196 / NCIMB 11849 / C 71).